The primary structure comprises 111 residues: Nucleoid-associated protein CYB_2894 (111 aa).

The protein belongs to the YbaB/EbfC family. In terms of assembly, homodimer.

It is found in the cytoplasm. The protein localises to the nucleoid. Binds to DNA and alters its conformation. May be involved in regulation of gene expression, nucleoid organization and DNA protection. The chain is Nucleoid-associated protein CYB_2894 from Synechococcus sp. (strain JA-2-3B'a(2-13)) (Cyanobacteria bacterium Yellowstone B-Prime).